Here is a 231-residue protein sequence, read N- to C-terminus: DNA mismatch repair protein MutH (231 aa).

Belongs to the MutH family.

The protein resides in the cytoplasm. Sequence-specific endonuclease that cleaves unmethylated GATC sequences. It is involved in DNA mismatch repair. The protein is DNA mismatch repair protein MutH of Salmonella paratyphi A (strain ATCC 9150 / SARB42).